Reading from the N-terminus, the 167-residue chain is Peptide deformylase (167 aa).

Residues Cys90 and His132 each coordinate Fe cation. Glu133 is a catalytic residue. His136 is a Fe cation binding site.

This sequence belongs to the polypeptide deformylase family. The cofactor is Fe(2+).

The enzyme catalyses N-terminal N-formyl-L-methionyl-[peptide] + H2O = N-terminal L-methionyl-[peptide] + formate. Its function is as follows. Removes the formyl group from the N-terminal Met of newly synthesized proteins. Requires at least a dipeptide for an efficient rate of reaction. N-terminal L-methionine is a prerequisite for activity but the enzyme has broad specificity at other positions. This Dehalococcoides mccartyi (strain ATCC BAA-2100 / JCM 16839 / KCTC 5957 / BAV1) protein is Peptide deformylase.